Consider the following 188-residue polypeptide: Photosystem I assembly protein Ycf4 (188 aa).

The next 2 membrane-spanning stretches (helical) occupy residues 26–46 (YFWA…GLSS) and 68–88 (LVMG…WFVI).

Belongs to the Ycf4 family.

It localises to the cellular thylakoid membrane. Seems to be required for the assembly of the photosystem I complex. The chain is Photosystem I assembly protein Ycf4 from Synechococcus elongatus (strain ATCC 33912 / PCC 7942 / FACHB-805) (Anacystis nidulans R2).